Reading from the N-terminus, the 325-residue chain is Serpentine receptor class delta-59 (325 aa).

The next 8 membrane-spanning stretches (helical) occupy residues 14 to 34 (WYWP…LHLI), 45 to 65 (LKIF…FAFL), 75 to 95 (ISAA…TCFI), 97 to 117 (YHVF…TVLF), 132 to 152 (TYIM…IPFT), 190 to 210 (FLSA…GCLI), 235 to 255 (TLIH…IPSF), and 275 to 295 (ILVS…YFIV).

It belongs to the nematode receptor-like protein srd family.

It localises to the membrane. This chain is Serpentine receptor class delta-59 (srd-59), found in Caenorhabditis elegans.